The primary structure comprises 396 residues: Ribosomal RNA small subunit methyltransferase H (396 aa).

S-adenosyl-L-methionine is bound by residues 101 to 103 (GGH), aspartate 120, tyrosine 147, aspartate 171, and glutamine 178.

This sequence belongs to the methyltransferase superfamily. RsmH family.

The protein localises to the cytoplasm. The enzyme catalyses cytidine(1402) in 16S rRNA + S-adenosyl-L-methionine = N(4)-methylcytidine(1402) in 16S rRNA + S-adenosyl-L-homocysteine + H(+). In terms of biological role, specifically methylates the N4 position of cytidine in position 1402 (C1402) of 16S rRNA. The protein is Ribosomal RNA small subunit methyltransferase H of Mycobacterium bovis (strain ATCC BAA-935 / AF2122/97).